The primary structure comprises 213 residues: Adenylate kinase (213 aa).

10 to 15 (GSGKGT) is a binding site for ATP. The interval 30–59 (SVGDLLRNIISSESKLGKGIKDTVESGNLI) is NMP. AMP contacts are provided by residues arginine 36, 57–59 (NLI), 83–86 (GFPR), and glutamine 90. The segment at 125–160 (DRLTCLDCKSIYSISSFKNTTCAKCKSTRLEKRIDD) is LID. Arginine 126 lines the ATP pocket. Positions 129 and 132 each coordinate Zn(2+). Residue 135-136 (IY) participates in ATP binding. 2 residues coordinate Zn(2+): cysteine 146 and cysteine 149. 2 residues coordinate AMP: arginine 157 and arginine 169. Leucine 195 contributes to the ATP binding site.

It belongs to the adenylate kinase family. As to quaternary structure, monomer.

It is found in the cytoplasm. The enzyme catalyses AMP + ATP = 2 ADP. The protein operates within purine metabolism; AMP biosynthesis via salvage pathway; AMP from ADP: step 1/1. Functionally, catalyzes the reversible transfer of the terminal phosphate group between ATP and AMP. Plays an important role in cellular energy homeostasis and in adenine nucleotide metabolism. The protein is Adenylate kinase of Wolbachia pipientis subsp. Culex pipiens (strain wPip).